Consider the following 115-residue polypeptide: Large ribosomal subunit protein bL20 (115 aa).

This sequence belongs to the bacterial ribosomal protein bL20 family.

Binds directly to 23S ribosomal RNA and is necessary for the in vitro assembly process of the 50S ribosomal subunit. It is not involved in the protein synthesizing functions of that subunit. The sequence is that of Large ribosomal subunit protein bL20 from Prochlorococcus marinus (strain NATL2A).